The primary structure comprises 308 residues: Methionyl-tRNA formyltransferase (308 aa).

109 to 112 (SLLP) is a (6S)-5,6,7,8-tetrahydrofolate binding site.

This sequence belongs to the Fmt family.

It catalyses the reaction L-methionyl-tRNA(fMet) + (6R)-10-formyltetrahydrofolate = N-formyl-L-methionyl-tRNA(fMet) + (6S)-5,6,7,8-tetrahydrofolate + H(+). Attaches a formyl group to the free amino group of methionyl-tRNA(fMet). The formyl group appears to play a dual role in the initiator identity of N-formylmethionyl-tRNA by promoting its recognition by IF2 and preventing the misappropriation of this tRNA by the elongation apparatus. This chain is Methionyl-tRNA formyltransferase, found in Rhizorhabdus wittichii (strain DSM 6014 / CCUG 31198 / JCM 15750 / NBRC 105917 / EY 4224 / RW1) (Sphingomonas wittichii).